We begin with the raw amino-acid sequence, 492 residues long: Ribose import ATP-binding protein RbsA (492 aa).

2 consecutive ABC transporter domains span residues 3-239 (IDMR…VGRK) and 238-492 (RKLE…TGGK). 35-42 (GENGAGKS) is a binding site for ATP.

This sequence belongs to the ABC transporter superfamily. Ribose importer (TC 3.A.1.2.1) family. The complex is composed of an ATP-binding protein (RbsA), two transmembrane proteins (RbsC) and a solute-binding protein (RbsB).

It is found in the cell membrane. It catalyses the reaction D-ribose(out) + ATP + H2O = D-ribose(in) + ADP + phosphate + H(+). In terms of biological role, part of the ABC transporter complex RbsABC involved in ribose import. Responsible for energy coupling to the transport system. The polypeptide is Ribose import ATP-binding protein RbsA (Streptococcus agalactiae serotype III (strain NEM316)).